The following is a 321-amino-acid chain: N-acetyllactosaminide alpha-1,3-galactosyltransferase-like 1 (321 aa).

Residues 1 to 6 (MQYKKE) are Cytoplasmic-facing. Residues 7 to 24 (TLLLILLAILLALTQRYS) form a helical; Signal-anchor for type II membrane protein membrane-spanning segment. Residues 25 to 321 (RTKDHLQKMY…IKVAWQPRIT (297 aa)) lie on the Lumenal side of the membrane. Asn87 and Asn99 each carry an N-linked (GlcNAc...) asparagine glycan. Substrate-binding positions include 95–100 (FATGNF), 187–189 (TAN), and 209–212 (HAWW). The active-site Nucleophile is the Glu277.

The protein belongs to the glycosyltransferase 6 family. It depends on Mn(2+) as a cofactor.

It is found in the golgi apparatus. Its subcellular location is the golgi stack membrane. The enzyme catalyses a beta-D-galactosyl-(1-&gt;4)-N-acetyl-beta-D-glucosaminyl derivative + UDP-alpha-D-galactose = an alpha-D-galactosyl-(1-&gt;3)-beta-D-galactosyl-(1-&gt;4)-N-acetyl-beta-D-glucosaminyl derivative + UDP + H(+). It participates in protein modification; protein glycosylation. In terms of biological role, synthesizes the galactose-alpha(1,3)-galactose group by catalyzing the transfer of a galactose residue, with an alpha-1,3 linkage, on terminal lactosaminide (Gal-beta-1,4-GlcNAc-R) disaccharide borne by a glycoprotein or a glycolipid. The polypeptide is N-acetyllactosaminide alpha-1,3-galactosyltransferase-like 1 (Ggta1l1) (Rattus norvegicus (Rat)).